The primary structure comprises 181 residues: MLELTKRITHVDASEIHDNLVLPYELRIRGRLRATTETNLDVGLFLDRGPVLRDGDLLEAKSGEIIRIRAAEEPVVTARVETGLPLARLCYHLGNRHVSLQIGSGGAIGEDDRMGWVRFPPDHVLEELAERLGATVVHHTATFDPEPGAYNQAGQGHSHGHSHGHSHNHDHEHSHGHKHAH.

Positions 143–181 (FDPEPGAYNQAGQGHSHGHSHGHSHNHDHEHSHGHKHAH) are disordered.

The protein belongs to the UreE family.

The protein localises to the cytoplasm. Involved in urease metallocenter assembly. Binds nickel. Probably functions as a nickel donor during metallocenter assembly. In Marinobacter nauticus (strain ATCC 700491 / DSM 11845 / VT8) (Marinobacter aquaeolei), this protein is Urease accessory protein UreE.